The chain runs to 157 residues: Protein PEROXIN-4 (157 aa).

One can recognise a UBC core domain in the interval 3–153; that stretch reads ASRARLFKEY…AQMYTRLAAM (151 aa). Cys-90 acts as the Glycyl thioester intermediate in catalysis.

It belongs to the ubiquitin-conjugating enzyme family. As to quaternary structure, interacts with PEX22.

The protein localises to the peroxisome membrane. The catalysed reaction is S-ubiquitinyl-[E1 ubiquitin-activating enzyme]-L-cysteine + [E2 ubiquitin-conjugating enzyme]-L-cysteine = [E1 ubiquitin-activating enzyme]-L-cysteine + S-ubiquitinyl-[E2 ubiquitin-conjugating enzyme]-L-cysteine.. The protein operates within protein modification; protein ubiquitination. Functionally, required for peroxisome biogenesis. Necessary for the developmental elimination of obsolete peroxisome matrix proteins. May be involved in the ubiquitination of PEX5, targeting it for recycling. Accepts the ubiquitin from the E1 complex and catalyzes its covalent attachment to other proteins. The protein is Protein PEROXIN-4 (PEX4) of Arabidopsis thaliana (Mouse-ear cress).